The primary structure comprises 492 residues: Ketol-acid reductoisomerase (NADP(+)) (492 aa).

The region spanning 14 to 208 is the KARI N-terminal Rossmann domain; sequence LDQLGRCRFM…GGHKAGVLES (195 aa). Residues 45 to 48, R68, R76, S78, and 108 to 110 each bind NADP(+); these read CGAQ and DKQ. H132 is an active-site residue. G158 serves as a coordination point for NADP(+). 2 KARI C-terminal knotted domains span residues 209–344 and 345–485; these read SFVA…NAPK and YDGK…MTDM. 4 residues coordinate Mg(2+): D217, E221, E389, and E393. S414 contributes to the substrate binding site.

This sequence belongs to the ketol-acid reductoisomerase family. It depends on Mg(2+) as a cofactor.

The catalysed reaction is (2R)-2,3-dihydroxy-3-methylbutanoate + NADP(+) = (2S)-2-acetolactate + NADPH + H(+). The enzyme catalyses (2R,3R)-2,3-dihydroxy-3-methylpentanoate + NADP(+) = (S)-2-ethyl-2-hydroxy-3-oxobutanoate + NADPH + H(+). It participates in amino-acid biosynthesis; L-isoleucine biosynthesis; L-isoleucine from 2-oxobutanoate: step 2/4. It functions in the pathway amino-acid biosynthesis; L-valine biosynthesis; L-valine from pyruvate: step 2/4. Its function is as follows. Involved in the biosynthesis of branched-chain amino acids (BCAA). Catalyzes an alkyl-migration followed by a ketol-acid reduction of (S)-2-acetolactate (S2AL) to yield (R)-2,3-dihydroxy-isovalerate. In the isomerase reaction, S2AL is rearranged via a Mg-dependent methyl migration to produce 3-hydroxy-3-methyl-2-ketobutyrate (HMKB). In the reductase reaction, this 2-ketoacid undergoes a metal-dependent reduction by NADPH to yield (R)-2,3-dihydroxy-isovalerate. In Haemophilus influenzae (strain 86-028NP), this protein is Ketol-acid reductoisomerase (NADP(+)).